A 785-amino-acid polypeptide reads, in one-letter code: Endonuclease MutS2 (785 aa).

335–342 provides a ligand contact to ATP; the sequence is GPNTGGKT. The region spanning 710–785 is the Smr domain; that stretch reads LDLRGERYEE…GLGNTVVELR (76 aa). The disordered stretch occupies residues 764–785; it reads VKSARDGGANEGGLGNTVVELR.

It belongs to the DNA mismatch repair MutS family. MutS2 subfamily. In terms of assembly, homodimer. Binds to stalled ribosomes, contacting rRNA.

Functionally, endonuclease that is involved in the suppression of homologous recombination and thus may have a key role in the control of bacterial genetic diversity. In terms of biological role, acts as a ribosome collision sensor, splitting the ribosome into its 2 subunits. Detects stalled/collided 70S ribosomes which it binds and splits by an ATP-hydrolysis driven conformational change. Acts upstream of the ribosome quality control system (RQC), a ribosome-associated complex that mediates the extraction of incompletely synthesized nascent chains from stalled ribosomes and their subsequent degradation. Probably generates substrates for RQC. The polypeptide is Endonuclease MutS2 (Halalkalibacterium halodurans (strain ATCC BAA-125 / DSM 18197 / FERM 7344 / JCM 9153 / C-125) (Bacillus halodurans)).